Consider the following 191-residue polypeptide: Prostaglandin-H2 D-isomerase (191 aa).

The first 24 residues, 1–24 (MGALCTLWLGLVLLGVLGALQTSA), serve as a signal peptide directing secretion. The residue at position 25 (Q25) is a Pyrrolidone carboxylic acid. A glycan (N-linked (GlcNAc...) asparagine) is linked at N51. The Nucleophile role is filled by C65. N-linked (GlcNAc...) asparagine glycosylation occurs at N78. C89 and C186 are oxidised to a cystine.

Belongs to the calycin superfamily. Lipocalin family. In terms of assembly, monomer. Post-translationally, N- and O-glycosylated. Both N-glycosylation recognition sites are almost quantitatively occupied by N-glycans of the biantennary complex type, with a considerable proportion of structures bearing a bisecting GlcNAc. N-glycan at Asn-78: dHex1Hex5HexNAc4. Agalacto structure as well as sialylated and nonsialylated oligosaccharides bearing alpha2-3- and/or alpha2-6-linked NeuNAc are present.

It is found in the rough endoplasmic reticulum. The protein resides in the nucleus membrane. It localises to the golgi apparatus. The protein localises to the cytoplasm. Its subcellular location is the perinuclear region. It is found in the secreted. The enzyme catalyses prostaglandin H2 = prostaglandin D2. Catalyzes the conversion of PGH2 to PGD2, a prostaglandin involved in smooth muscle contraction/relaxation and a potent inhibitor of platelet aggregation. Involved in a variety of CNS functions, such as sedation, NREM sleep and PGE2-induced allodynia, and may have an anti-apoptotic role in oligodendrocytes. Binds small non-substrate lipophilic molecules, including biliverdin, bilirubin, retinal, retinoic acid and thyroid hormone, and may act as a scavenger for harmful hydrophobic molecules and as a secretory retinoid and thyroid hormone transporter. Possibly involved in development and maintenance of the blood-brain, blood-retina, blood-aqueous humor and blood-testis barrier. It is likely to play important roles in both maturation and maintenance of the central nervous system and male reproductive system. Involved in PLA2G3-dependent maturation of mast cells. PLA2G3 is secreted by immature mast cells and acts on nearby fibroblasts upstream to PTDGS to synthesize PGD2, which in turn promotes mast cell maturation and degranulation via PTGDR. In Canis lupus familiaris (Dog), this protein is Prostaglandin-H2 D-isomerase (PTGDS).